We begin with the raw amino-acid sequence, 330 residues long: Aspartate--ammonia ligase (330 aa).

Belongs to the class-II aminoacyl-tRNA synthetase family. AsnA subfamily.

The protein localises to the cytoplasm. It carries out the reaction L-aspartate + NH4(+) + ATP = L-asparagine + AMP + diphosphate + H(+). It functions in the pathway amino-acid biosynthesis; L-asparagine biosynthesis; L-asparagine from L-aspartate (ammonia route): step 1/1. The polypeptide is Aspartate--ammonia ligase (Escherichia coli (strain SMS-3-5 / SECEC)).